The following is a 67-amino-acid chain: DNA-directed RNA polymerase subunit omega (67 aa).

Belongs to the RNA polymerase subunit omega family. The RNAP catalytic core consists of 2 alpha, 1 beta, 1 beta' and 1 omega subunit. When a sigma factor is associated with the core the holoenzyme is formed, which can initiate transcription.

The catalysed reaction is RNA(n) + a ribonucleoside 5'-triphosphate = RNA(n+1) + diphosphate. Its function is as follows. Promotes RNA polymerase assembly. Latches the N- and C-terminal regions of the beta' subunit thereby facilitating its interaction with the beta and alpha subunits. In Nitrosomonas eutropha (strain DSM 101675 / C91 / Nm57), this protein is DNA-directed RNA polymerase subunit omega.